The sequence spans 679 residues: Glycine--tRNA ligase beta subunit (679 aa).

The protein belongs to the class-II aminoacyl-tRNA synthetase family. Tetramer of two alpha and two beta subunits.

The protein resides in the cytoplasm. The enzyme catalyses tRNA(Gly) + glycine + ATP = glycyl-tRNA(Gly) + AMP + diphosphate. The sequence is that of Glycine--tRNA ligase beta subunit from Streptococcus pyogenes serotype M28 (strain MGAS6180).